The following is a 501-amino-acid chain: MVLVVDYGSQYSRLITRRIRENEVYSEVVFPDDKVDLSKVDTVILSGGPRSVYEEDAPKLPEWFQEYKGPVLAICYGMQLIVKELGGEVRRGRGEYGRTLVELSRDPIFEGIPEKVHVWMSHGDEVVRLPEGFHPIAVSETGVIAAATDGKRFWLLQFHPEVHHTEYGDRMISNFLFNVCKLEKNWKIGDLVEEKIRHIKETIGNKKAILALSGGVDSSVAAVLVHRAIGKNLVCVFVDHGLLRKNEREEVERVFKEHFDMNLVVVDARKRFLEKLRGVTDPEKKRKIIGEEFIRVFEEEAKKHDVEFLVQGTIYSDVIESAASGKTTAKIKSHHNVGGLPEKMNLKLVEPLRDLFKDEVRKVGKYLGIPDRIINRHPFPGPGLAVRVLGEVTEEKLEILREADYIFIETLRKHDYYDKVWQAFAVLLPIKSVGVKGDARAYEYVVALRAVNSVEGMTADWSRIPHDILDEAARRITREVKGVGRVVYDITSKPPATIEWE.

Positions 1–185 (MVLVVDYGSQ…LFNVCKLEKN (185 aa)) constitute a Glutamine amidotransferase type-1 domain. C75 acts as the Nucleophile in catalysis. Catalysis depends on residues H159 and E161. Residues 186–376 (WKIGDLVEEK…LGIPDRIINR (191 aa)) enclose the GMPS ATP-PPase domain. Residue 213 to 219 (SGGVDSS) participates in ATP binding.

In terms of assembly, homodimer.

The catalysed reaction is XMP + L-glutamine + ATP + H2O = GMP + L-glutamate + AMP + diphosphate + 2 H(+). The protein operates within purine metabolism; GMP biosynthesis; GMP from XMP (L-Gln route): step 1/1. Functionally, catalyzes the synthesis of GMP from XMP. This chain is GMP synthase [glutamine-hydrolyzing], found in Thermotoga petrophila (strain ATCC BAA-488 / DSM 13995 / JCM 10881 / RKU-1).